The sequence spans 381 residues: Subtilisin amylosacchariticus (381 aa).

The signal sequence occupies residues 1–29 (MRSKKLWISLLFALTLIFTMAFSNMSAQA). The propeptide occupies 30–106 (AGKSSTEKKY…VEEDHIAHEY (77 aa)). Residues 38–103 (KYIVGFKQTM…VAYVEEDHIA (66 aa)) form the Inhibitor I9 domain. Residue Q108 participates in Ca(2+) binding. A Peptidase S8 domain is found at 111–380 (PYGISQIKAP…KGLINVQAAA (270 aa)). The active-site Charge relay system is the D138. D147 contributes to the Ca(2+) binding site. Catalysis depends on H170, which acts as the Charge relay system. Ca(2+) contacts are provided by L181, N183, I185, V187, A275, Y277, and T280. Residue S327 is the Charge relay system of the active site.

It belongs to the peptidase S8 family. It depends on Ca(2+) as a cofactor.

It localises to the secreted. The enzyme catalyses Hydrolysis of proteins with broad specificity for peptide bonds, and a preference for a large uncharged residue in P1. Hydrolyzes peptide amides.. Functionally, subtilisin is an extracellular alkaline serine protease, it catalyzes the hydrolysis of proteins and peptide amides. The protein is Subtilisin amylosacchariticus (apr) of Bacillus subtilis subsp. amylosacchariticus.